Reading from the N-terminus, the 97-residue chain is UPF0235 protein APL_1380 (97 aa).

Belongs to the UPF0235 family.

This is UPF0235 protein APL_1380 from Actinobacillus pleuropneumoniae serotype 5b (strain L20).